Here is a 419-residue protein sequence, read N- to C-terminus: UDP-N-acetylglucosamine 1-carboxyvinyltransferase (419 aa).

Position 22–23 (22–23) interacts with phosphoenolpyruvate; it reads KN. A UDP-N-acetyl-alpha-D-glucosamine-binding site is contributed by R91. C115 functions as the Proton donor in the catalytic mechanism. Position 115 is a 2-(S-cysteinyl)pyruvic acid O-phosphothioketal (C115). Residues 120-124, 160-163, D305, and V327 contribute to the UDP-N-acetyl-alpha-D-glucosamine site; these read RPVDL and KVSV.

It belongs to the EPSP synthase family. MurA subfamily.

The protein localises to the cytoplasm. The catalysed reaction is phosphoenolpyruvate + UDP-N-acetyl-alpha-D-glucosamine = UDP-N-acetyl-3-O-(1-carboxyvinyl)-alpha-D-glucosamine + phosphate. The protein operates within cell wall biogenesis; peptidoglycan biosynthesis. Cell wall formation. Adds enolpyruvyl to UDP-N-acetylglucosamine. The protein is UDP-N-acetylglucosamine 1-carboxyvinyltransferase of Escherichia fergusonii (strain ATCC 35469 / DSM 13698 / CCUG 18766 / IAM 14443 / JCM 21226 / LMG 7866 / NBRC 102419 / NCTC 12128 / CDC 0568-73).